The primary structure comprises 63 residues: Large ribosomal subunit protein bL32 (63 aa).

The segment covering 1–18 has biased composition (basic residues); the sequence is MAHPKRRISRSRRDKRRA. Residues 1–27 are disordered; that stretch reads MAHPKRRISRSRRDKRRAQYNAKTKAP.

The protein belongs to the bacterial ribosomal protein bL32 family.

In Chloroherpeton thalassium (strain ATCC 35110 / GB-78), this protein is Large ribosomal subunit protein bL32.